The primary structure comprises 65 residues: Beta-defensin 41 (65 aa).

The N-terminal stretch at Met1 to Ala19 is a signal peptide. Disulfide bonds link Cys35–Cys63, Cys42–Cys56, and Cys46–Cys64.

Belongs to the beta-defensin family. As to expression, isoform 2 is epididymis-specific and expressed mainly in the proximal caput.

It localises to the secreted. Functionally, has bactericidal activity. Isoform 2 may play a role in the antimicrobial protection of sperm and urogenital tract epithelia. The chain is Beta-defensin 41 from Mus musculus (Mouse).